The chain runs to 610 residues: Elongation factor 4 (610 aa).

One can recognise a tr-type G domain in the interval 11–193 (EKIRNFSIIA…QIVEKVPAPT (183 aa)). GTP-binding positions include 23-28 (DHGKST) and 140-143 (NKID).

It belongs to the TRAFAC class translation factor GTPase superfamily. Classic translation factor GTPase family. LepA subfamily.

It localises to the cell membrane. The catalysed reaction is GTP + H2O = GDP + phosphate + H(+). In terms of biological role, required for accurate and efficient protein synthesis under certain stress conditions. May act as a fidelity factor of the translation reaction, by catalyzing a one-codon backward translocation of tRNAs on improperly translocated ribosomes. Back-translocation proceeds from a post-translocation (POST) complex to a pre-translocation (PRE) complex, thus giving elongation factor G a second chance to translocate the tRNAs correctly. Binds to ribosomes in a GTP-dependent manner. This chain is Elongation factor 4, found in Streptococcus pyogenes serotype M2 (strain MGAS10270).